The following is a 326-amino-acid chain: Aspartate--ammonia ligase (326 aa).

Belongs to the class-II aminoacyl-tRNA synthetase family. AsnA subfamily.

The protein localises to the cytoplasm. It carries out the reaction L-aspartate + NH4(+) + ATP = L-asparagine + AMP + diphosphate + H(+). It participates in amino-acid biosynthesis; L-asparagine biosynthesis; L-asparagine from L-aspartate (ammonia route): step 1/1. In Malacoplasma penetrans (strain HF-2) (Mycoplasma penetrans), this protein is Aspartate--ammonia ligase.